The following is a 236-amino-acid chain: Small ribosomal subunit protein uS3 (236 aa).

The 69-residue stretch at 39 to 107 (VREFLKKKLA…PVHLNIEEVR (69 aa)) folds into the KH type-2 domain. Positions 215–236 (AAQPAEPEKKVRKSGAKNAATS) are disordered.

Belongs to the universal ribosomal protein uS3 family. As to quaternary structure, part of the 30S ribosomal subunit. Forms a tight complex with proteins S10 and S14.

Binds the lower part of the 30S subunit head. Binds mRNA in the 70S ribosome, positioning it for translation. The protein is Small ribosomal subunit protein uS3 of Methylobacillus flagellatus (strain ATCC 51484 / DSM 6875 / VKM B-1610 / KT).